The primary structure comprises 487 residues: MAEIRKLKNYINGEWVESKTDQYEDVVNPATKEVLCQVPISTKEDIDYAAQTAAEAFKTWSKVAVPRRARILFNFQQLLSQHKEELAHLITIENGKNTKEALGEVGRGIENVEFAAGAPSLMMGDSLASIATDVEAANYRYPIGVVGGIAPFNFPMMVPCWMFPMAIALGNTFILKPSERTPLLTEKLVELFEKAGLPKGVFNVVYGAHDVVNGILEHPEIKAISFVGSKPVGEYVYKKGSENLKRVQSLTGAKNHTIVLNDANLEDTVTNIVGAAFGSAGERCMACAVVTVEEGIADEFMAKLQEKVADIKIGNGLDDGVFLGPVIREDNKKRTLSYIEKGLEEGARLVCDGRENVSDDGYFVGPTIFDNVTTEMTIWKDEIFAPVLSVIRVKNLKEAIEIANKSEFANGACLFTSNSNAIRYFRENIDAGMLGINLGVPAPMAFFPFSGWKSSFFGTLHANGKDSVDFYTRKKVVTARYPAPDFN.

Residues Ala-150, Phe-152, Lys-176, Glu-179, Arg-180, Ser-229, and Thr-251 each coordinate NAD(+). Cys-284 serves as the catalytic Nucleophile. Glu-382 is a binding site for NAD(+).

This sequence belongs to the aldehyde dehydrogenase family. IolA subfamily. As to quaternary structure, homotetramer.

It carries out the reaction 3-oxopropanoate + NAD(+) + CoA + H2O = hydrogencarbonate + acetyl-CoA + NADH + H(+). The enzyme catalyses 2-methyl-3-oxopropanoate + NAD(+) + CoA + H2O = propanoyl-CoA + hydrogencarbonate + NADH + H(+). Its pathway is polyol metabolism; myo-inositol degradation into acetyl-CoA; acetyl-CoA from myo-inositol: step 7/7. In terms of biological role, catalyzes the oxidation of malonate semialdehyde (MSA) and methylmalonate semialdehyde (MMSA) into acetyl-CoA and propanoyl-CoA, respectively. Is involved in a myo-inositol catabolic pathway. Bicarbonate, and not CO2, is the end-product of the enzymatic reaction. The protein is Malonate-semialdehyde dehydrogenase of Bacillus subtilis (strain 168).